A 440-amino-acid polypeptide reads, in one-letter code: Ribosomal protein uS12 methylthiotransferase RimO (440 aa).

An MTTase N-terminal domain is found at 7-117; it reads PKISFVSLGC…VLDAVHRALP (111 aa). 6 residues coordinate [4Fe-4S] cluster: cysteine 16, cysteine 52, cysteine 81, cysteine 148, cysteine 152, and cysteine 155. Residues 134–370 form the Radical SAM core domain; sequence LTPRHYAYLK…MARQQKISAQ (237 aa). The 67-residue stretch at 373–439 folds into the TRAM domain; sequence KRKVGTRQQV…EYDLHGSVAG (67 aa).

It belongs to the methylthiotransferase family. RimO subfamily. The cofactor is [4Fe-4S] cluster.

Its subcellular location is the cytoplasm. It carries out the reaction L-aspartate(89)-[ribosomal protein uS12]-hydrogen + (sulfur carrier)-SH + AH2 + 2 S-adenosyl-L-methionine = 3-methylsulfanyl-L-aspartate(89)-[ribosomal protein uS12]-hydrogen + (sulfur carrier)-H + 5'-deoxyadenosine + L-methionine + A + S-adenosyl-L-homocysteine + 2 H(+). Catalyzes the methylthiolation of an aspartic acid residue of ribosomal protein uS12. The protein is Ribosomal protein uS12 methylthiotransferase RimO of Afipia carboxidovorans (strain ATCC 49405 / DSM 1227 / KCTC 32145 / OM5) (Oligotropha carboxidovorans).